A 1032-amino-acid polypeptide reads, in one-letter code: Probable ATP-dependent RNA helicase DDX46 (1032 aa).

Over residues 1–24 (MGRESRHYRKRSASRGRSGSRSRS) the composition is skewed to basic residues. Positions 1–227 (MGRESRHYRK…NEMEDEELDP (227 aa)) are disordered. Glycine 2 is lipidated: N-myristoyl glycine. The segment covering 26-49 (SPSDKRSKRGDDRRSRSRDRDRRR) has biased composition (basic and acidic residues). Basic residues-rich tracts occupy residues 50–73 (ERSRSRDKRRSRSRDRKRLRRSRS) and 81–103 (ERRRSRSRDRRRSRSRSRGRRSR). Over residues 112–200 (KKAENRSRSK…EMKQGKKWSL (89 aa)) the composition is skewed to basic and acidic residues. Positions 152 to 197 (DQNKLEEEMRKRKERVEKWREEQRKKAMENIGELKKEIEEMKQGKK) form a coiled coil. Lysine 186 is covalently cross-linked (Glycyl lysine isopeptide (Lys-Gly) (interchain with G-Cter in SUMO2)). A Phosphoserine modification is found at serine 199. The segment covering 201–211 (EDDDDDEDDPA) has biased composition (acidic residues). Lysine 263 carries the N6-acetyllysine modification. Tyrosine 294 is subject to Phosphotyrosine. Serine 295 and serine 296 each carry phosphoserine. Lysine 325 participates in a covalent cross-link: Glycyl lysine isopeptide (Lys-Gly) (interchain with G-Cter in SUMO2). Serine 346 is subject to Phosphoserine. A Q motif motif is present at residues 372-400 (KSWVQCGISMKILNSLKKHGYEKPTPIQT). Residues 403 to 581 (IPAIMSGRDL…RRILSKPIEV (179 aa)) enclose the Helicase ATP-binding domain. The short motif at 529–532 (DEAD) is the DEAD box element. Residues 592-753 (DVEQQVIVIE…AVPPDLEKLW (162 aa)) enclose the Helicase C-terminal domain. An N6-acetyllysine modification is found at lysine 776. Lysine 779 participates in a covalent cross-link: Glycyl lysine isopeptide (Lys-Gly) (interchain with G-Cter in SUMO2). Serine 804 bears the Phosphoserine mark. Lysine 904 carries the post-translational modification N6-acetyllysine. Residues lysine 908 and lysine 916 each participate in a glycyl lysine isopeptide (Lys-Gly) (interchain with G-Cter in SUMO2) cross-link. Serine 929 carries the post-translational modification Phosphoserine.

This sequence belongs to the DEAD box helicase family. DDX46/PRP5 subfamily. As to quaternary structure, component of the 17S U2 SnRNP complex, a ribonucleoprotein complex that contains small nuclear RNA (snRNA) U2 and a number of specific proteins. Within the 17S U2 SnRNP complex, DDX46 is part of the SF3B subcomplex, which is required for 'A' complex assembly formed by the stable binding of U2 snRNP to the branchpoint sequence in pre-mRNA. Recruited to the 17S U2 SnRNP complex following release of DDX42; DDX42 and DDX46 bind the SF3B subcomplex in a competitive manner.

It is found in the nucleus speckle. It localises to the nucleus. The protein localises to the cajal body. The enzyme catalyses ATP + H2O = ADP + phosphate + H(+). In terms of biological role, component of the 17S U2 SnRNP complex of the spliceosome, a large ribonucleoprotein complex that removes introns from transcribed pre-mRNAs. The 17S U2 SnRNP complex (1) directly participates in early spliceosome assembly and (2) mediates recognition of the intron branch site during pre-mRNA splicing by promoting the selection of the pre-mRNA branch-site adenosine, the nucleophile for the first step of splicing. Within the 17S U2 SnRNP complex, DDX46 plays essential roles during assembly of pre-spliceosome and proofreading of the branch site. The polypeptide is Probable ATP-dependent RNA helicase DDX46 (Ddx46) (Rattus norvegicus (Rat)).